A 66-amino-acid chain; its full sequence is Large ribosomal subunit protein bL35 (66 aa).

Basic residues-rich tracts occupy residues 1 to 16 (MPKFKTHRASAKRFKR) and 23 to 45 (KRSHAYTSHRFHGKTKKQRRQLR). Residues 1–66 (MPKFKTHRAS…RIRQMLSGLK (66 aa)) are disordered.

This sequence belongs to the bacterial ribosomal protein bL35 family.

This chain is Large ribosomal subunit protein bL35, found in Latilactobacillus sakei subsp. sakei (strain 23K) (Lactobacillus sakei subsp. sakei).